The primary structure comprises 266 residues: Killer cell lectin-like receptor 6 (266 aa).

The Cytoplasmic segment spans residues 1 to 44 (MSEPEVTYSTVRLHKSSRLQKLVRHEETQGPREAGYRKCSVCWQ). The helical; Signal-anchor for type II membrane protein transmembrane segment at 45–66 (LIVKALGILCFLLLITVAVLAV) threads the bilayer. At 67–266 (KIFQYGQHNQ…CGKKLDKFPH (200 aa)) the chain is on the extracellular side. Residues N87 and N104 are each glycosylated (N-linked (GlcNAc...) asparagine). Residues 143-261 (GVKYWFCYRT…SHYCICGKKL (119 aa)) enclose the C-type lectin domain. Intrachain disulfides connect C149/C154, C167/C255, C171/C257, and C236/C249.

As to quaternary structure, homodimer; disulfide-linked.

The protein resides in the membrane. Functionally, receptor on natural killer (NK) cells for class I MHC. The polypeptide is Killer cell lectin-like receptor 6 (Klra6) (Mus musculus (Mouse)).